The sequence spans 87 residues: UPF0367 protein P9303_26451 (87 aa).

The protein belongs to the UPF0367 family.

The sequence is that of UPF0367 protein P9303_26451 from Prochlorococcus marinus (strain MIT 9303).